The sequence spans 1190 residues: Pyruvate-flavodoxin oxidoreductase (1190 aa).

4Fe-4S ferredoxin-type domains lie at 687–716 (EIPVWDTDVCIQCGKCVMVCPHSVIRSKVY) and 743–773 (FTIQVAAEDCTGCGICVDVCPAKNKAQPRKK). The [4Fe-4S] cluster site is built by Cys-696, Cys-699, Cys-702, Cys-706, Cys-752, Cys-755, Cys-758, Cys-762, Cys-826, Cys-829, Cys-854, and Cys-1089.

The protein belongs to the pyruvate:ferredoxin/flavodoxin oxidoreductase family. Requires [4Fe-4S] cluster as cofactor.

The enzyme catalyses oxidized [flavodoxin] + pyruvate + CoA + 2 H(+) = reduced [flavodoxin] + acetyl-CoA + CO2. In terms of biological role, oxidoreductase required for the transfer of electrons from pyruvate to flavodoxin, which reduces nitrogenase. The chain is Pyruvate-flavodoxin oxidoreductase (nifJ) from Trichormus variabilis (strain ATCC 29413 / PCC 7937) (Anabaena variabilis).